The sequence spans 1289 residues: Long-tail fiber proximal subunit (1289 aa).

Belongs to the tevenvirinae long-tail fiber proximal subunit protein family. As to quaternary structure, the long-tail fibers are trimeric, with a stoichiometry of gp34/gp37/gp36/gp35 of 3:3:3:1.

Its subcellular location is the virion. Structural component of the proximal-half of the long-tail fiber. The long-tail fibers of T4 are about 1600 Angstroms long with a kink in the middle that divides the fiber into proximal and distal halves. The sequence is that of Long-tail fiber proximal subunit (34) from Escherichia coli (Bacteriophage T4).